We begin with the raw amino-acid sequence, 574 residues long: Regulatory protein NPR4 (574 aa).

The tract at residues 1 to 21 is disordered; that stretch reads MAATAIEPSSSISFTSSHLSN. The segment covering 9-20 has biased composition (low complexity); the sequence is SSSISFTSSHLS. Phosphoserine is present on serine 11. Residues 54 to 130 form the BTB domain; the sequence is TDAEIIIEEE…IYTGRLKPFP (77 aa). The segment at 133-147 adopts a C2HC NPR-type zinc-finger fold; the sequence is VSTCVDSVCAHDSCK. Cysteine 136, cysteine 141, histidine 143, and cysteine 146 together coordinate Zn(2+). 3 ANK repeats span residues 252–280, 281–311, and 315–344; these read ERTGKVLKALDSDDVELVKLLLTESDITL, DQANGLHYAVAYSDPKVVTQVLDLDMADVNF, and RGYTVLHIAAMRREPTIIIPLIQKGANASD. Residues 373–516 form a salicylic acid-binding core (SBC) region; that stretch reads EPSKYRLCID…MDQYMDEEIP (144 aa). Arginine 419 lines the salicylate pocket. Residues 521–574 are disordered; it reads PEKGTVKERRQKRMRYNELKNDVKKAYSKDKVARSCLSSSSPASSLREALENPT. A compositionally biased stretch (basic and acidic residues) spans 535–553; sequence RYNELKNDVKKAYSKDKVA. Over residues 554 to 567 the composition is skewed to low complexity; it reads RSCLSSSSPASSLR.

This sequence belongs to the plant 'ANKYRIN-BTB/POZ' family. 'NPR1-like' subfamily. As to quaternary structure, forms homodimers, homotetramers and heterodimers with NPR3 in the presence of salicylic acid (SA). Interacts with TGA2, TGA3, TGA5, TGA6 and TGA7. Interacts with CUL3A, a core component of the cullin-RING ubiquitin ligases (CRL). Binds to NPR1; this interaction is disrupted by association with SA, probably due to conformational changes.

It is found in the nucleus. The protein operates within protein modification; protein ubiquitination. Its function is as follows. Salicylic acid (SA)-binding substrate-specific adapter of an E3 ubiquitin-protein ligase complex (CUL3-RBX1-BTB) which mediates the ubiquitination and subsequent proteasomal degradation of NPR1 in the absence of SA. Together with NPR3, acts as receptor of salicylic acid to monitor immunity in a NPR1-dependent manner and induce systemic acquired resistance (SAR). Involved in the regulation of basal defense responses against pathogens, and may be implicated in the cross-talk between the SA- and JA-dependent signaling pathways. In Arabidopsis thaliana (Mouse-ear cress), this protein is Regulatory protein NPR4.